A 401-amino-acid chain; its full sequence is MKKLWQNCHIATMQNGQYSYIEDAAIVTEGHLIHWIGKQQQLPADTYSETVDLNGAWVTPGFIDCHTHSVFGGNRSVEFEKRLQGVSYAEIAASGGGIASTVRATREASEEQLLNSALKRIRCMQQDGVTTIEIKSGYGLNYENERKMLRVIRQIGEKLPMTVKSTCLAAHALPPEYKDQSDAYIEHICTEMLPKLHAEGLVDAVDAFCEHLAFSPAQVERVFKTAQSLGLPVKLHAEQLSSLGGSSLAARYHALSADHLEYMTEDDVKAMAESGTVAVLLPGAFYLLRETQYPPIESLIKHGVRIALSSDLNPGTSPALSLRLILNMGSTLFRLTPEQALAGITIHAAQALGLEQTHGSLEQGKVADFVAWDIEHPSEIVYWLGGDLPKRVVQHGQEVIF.

Residues H66 and H68 each contribute to the Fe(3+) site. Positions 66 and 68 each coordinate Zn(2+). 3 residues coordinate 4-imidazolone-5-propanoate: R75, Y138, and H171. Residue Y138 participates in N-formimidoyl-L-glutamate binding. Residue H236 coordinates Fe(3+). Zn(2+) is bound at residue H236. 4-imidazolone-5-propanoate is bound at residue Q239. D311 lines the Fe(3+) pocket. D311 contributes to the Zn(2+) binding site. N-formimidoyl-L-glutamate-binding residues include N313 and G315. T316 provides a ligand contact to 4-imidazolone-5-propanoate.

The protein belongs to the metallo-dependent hydrolases superfamily. HutI family. Zn(2+) serves as cofactor. Fe(3+) is required as a cofactor.

It localises to the cytoplasm. The enzyme catalyses 4-imidazolone-5-propanoate + H2O = N-formimidoyl-L-glutamate. The protein operates within amino-acid degradation; L-histidine degradation into L-glutamate; N-formimidoyl-L-glutamate from L-histidine: step 3/3. Its function is as follows. Catalyzes the hydrolytic cleavage of the carbon-nitrogen bond in imidazolone-5-propanoate to yield N-formimidoyl-L-glutamate. It is the third step in the universal histidine degradation pathway. The protein is Imidazolonepropionase of Acinetobacter baumannii (strain AB0057).